A 103-amino-acid polypeptide reads, in one-letter code: Large ribosomal subunit protein bL21 (103 aa).

Belongs to the bacterial ribosomal protein bL21 family. Part of the 50S ribosomal subunit. Contacts protein L20.

Its function is as follows. This protein binds to 23S rRNA in the presence of protein L20. The polypeptide is Large ribosomal subunit protein bL21 (Paraburkholderia phytofirmans (strain DSM 17436 / LMG 22146 / PsJN) (Burkholderia phytofirmans)).